The sequence spans 392 residues: 5-azacytidine-induced protein 2 (392 aa).

The interval 1–197 (MDALVEDDIC…IELQKAKQTD (197 aa)) is homodimerization. Coiled coils occupy residues 40–76 (ALVTAYEDIKKRLKDSEKENSLLKKRIRFLEEKLIAR), 102–135 (DRDNLKSKLDKMNKDNSESLKVLNEQLQSKEVEL), and 166–196 (DLKIHGLEQELELMRKECSDLKIELQKAKQT). Residues 216-257 (SDNMQHAYWELKREMSNLHLVTQVQAELLRKLKTSTAIKKAC) form an interaction with TBK1 and IKBKE region. Residues Ser318 and Ser353 each carry the phosphoserine modification. The interval 345–365 (EDNSWVFPSPPKSSETAFGET) is disordered.

Homodimer. Interacts with IKBKE, TBK1 and TICAM1. Interacts with TAX1BP1. Interacts with CALCOCO2. Post-translationally, ubiquitinated via 'Lys-48'-linked polyubiquitination by TRIM38, leading to its degradation.

Its subcellular location is the cytoplasm. Its function is as follows. Adapter protein which binds TBK1 and IKBKE playing a role in antiviral innate immunity. Activates serine/threonine-protein kinase TBK1 and facilitates its oligomerization. Enhances the phosphorylation of NF-kappa-B p65 subunit RELA by TBK1. Promotes TBK1-induced as well as TNF-alpha or PMA-induced activation of NF-kappa-B. Participates in IFNB promoter activation via TICAM1. This Pongo abelii (Sumatran orangutan) protein is 5-azacytidine-induced protein 2 (AZI2).